Here is a 514-residue protein sequence, read N- to C-terminus: 2,3-bisphosphoglycerate-independent phosphoglycerate mutase (514 aa).

2 residues coordinate Mn(2+): aspartate 14 and serine 64. Serine 64 serves as the catalytic Phosphoserine intermediate. Substrate is bound by residues histidine 125, 155-156 (RD), arginine 187, arginine 193, 263-266 (RADR), and lysine 336. Residues aspartate 403, histidine 407, aspartate 444, histidine 445, and histidine 463 each contribute to the Mn(2+) site.

It belongs to the BPG-independent phosphoglycerate mutase family. As to quaternary structure, monomer. The cofactor is Mn(2+).

The catalysed reaction is (2R)-2-phosphoglycerate = (2R)-3-phosphoglycerate. The protein operates within carbohydrate degradation; glycolysis; pyruvate from D-glyceraldehyde 3-phosphate: step 3/5. In terms of biological role, catalyzes the interconversion of 2-phosphoglycerate and 3-phosphoglycerate. In Shewanella baltica (strain OS185), this protein is 2,3-bisphosphoglycerate-independent phosphoglycerate mutase.